Consider the following 141-residue polypeptide: 3-hydroxyacyl-[acyl-carrier-protein] dehydratase FabZ (141 aa).

The active site involves His48.

The protein belongs to the thioester dehydratase family. FabZ subfamily.

The protein resides in the cytoplasm. The enzyme catalyses a (3R)-hydroxyacyl-[ACP] = a (2E)-enoyl-[ACP] + H2O. In terms of biological role, involved in unsaturated fatty acids biosynthesis. Catalyzes the dehydration of short chain beta-hydroxyacyl-ACPs and long chain saturated and unsaturated beta-hydroxyacyl-ACPs. The chain is 3-hydroxyacyl-[acyl-carrier-protein] dehydratase FabZ from Bacillus velezensis (strain DSM 23117 / BGSC 10A6 / LMG 26770 / FZB42) (Bacillus amyloliquefaciens subsp. plantarum).